The sequence spans 621 residues: Phytoene desaturase (621 aa).

Residues Met-1 to Ala-23 form the signal peptide. The interval His-394–Lys-425 is disordered. A compositionally biased stretch (polar residues) spans Gln-397–Pro-414. A helical membrane pass occupies residues Trp-598–Met-618.

This sequence belongs to the carotenoid/retinoid oxidoreductase family. The cofactor is NAD(+).

The protein resides in the membrane. It carries out the reaction 15-cis-phytoene + 5 A = all-trans-3,4-didehydrolycopene + 5 AH2. The protein operates within carotenoid biosynthesis; lycopene biosynthesis. In terms of biological role, phytoene desaturase involved in the carotenoid biosynthesis pathway. Converts phytoene into 3,4-didehydrolycopene via the intermediary of phytofluene, zeta-carotene, neurosporene and lycopene, by introducing up to five double bonds into phytoene. This Cercospora nicotianae (Barn spot disease fungus) protein is Phytoene desaturase (PDH1).